Reading from the N-terminus, the 288-residue chain is CBY1-interacting BAR domain-containing protein 1 (288 aa).

The transit peptide at 1-47 (MLRRSLENRDAQTRQLQDAVTNVEKHFGELCQIFAAYVRKTARLRDK) directs the protein to the mitochondrion. The BAR-like stretch occupies residues 10–220 (DAQTRQLQDA…KIDEEEDLEV (211 aa)). A coiled-coil region spans residues 107-176 (KMKRDDLKAT…ETIDNFEKQK (70 aa)). A disordered region spans residues 266-288 (RKDHQTEDDDEEDEDLDVTEEEN). Acidic residues predominate over residues 271–288 (TEDDDEEDEDLDVTEEEN).

The protein belongs to the CIBAR family. Homodimer (via BAR-like domain). Heterodimer with FAM92B (via BAR-like domains). Interacts (via BAR-like domain) with CBY1; this interaction is required for targeting FAM92A to centriole and cilium basal body. Interacts (via BAR-like domain) with CBY3; both proteins form a ninefold symmetric structure at the flagellar base; are recruited to the annulus in a mutually dependent manner and regulate annulus positionning.

It localises to the cytoplasm. The protein localises to the cytoskeleton. It is found in the microtubule organizing center. The protein resides in the centrosome. Its subcellular location is the centriole. It localises to the cilium basal body. The protein localises to the cell projection. It is found in the cilium. The protein resides in the nucleus. Its subcellular location is the mitochondrion inner membrane. It localises to the flagellum. Functionally, plays a critical role in regulating mitochondrial ultrastructure and function by maintaining the integrity of mitochondrial morphology, particularly the organization of cristae. Preferentially binds to negatively charged phospholipids like cardiolipin and phosphatidylinositol 4,5-bisphosphate enhancing its interaction with mitochondrial membranes. Induces membrane curvature and tubulation, which are critical for maintaining mitochondrial ultrastructure and the organization of cristae. Plays a crucial role in ciliogenesis. May play a role in limb development through its role in ciliogenesis. Plays a key role in the correct positioning of the annulus, a septin-based ring structure in the sperm flagellum, serving both as a physical barrier and a membrane diffusion barrier that separates the midpiece (MP) from the principal piece (PP). This positioning is essential for proper sperm motility and function. Interacts with CBY3 to form a complex which localizes to the curved membrane region of the flagellar pocket. By doing so, may provide stability and rigidity to the periannular membrane to prevent membrane deformation. This function is crucial for halting annulus migration at the proximal end of the fibrous sheath-containing PP. The polypeptide is CBY1-interacting BAR domain-containing protein 1 (Bos taurus (Bovine)).